The following is a 354-amino-acid chain: Guanine nucleotide-binding protein alpha-2 subunit (354 aa).

The 322-residue stretch at 33–354 (KIYKVLLLGA…QHSLKEAGMF (322 aa)) folds into the G-alpha domain. The segment at 36–49 (KVLLLGASDSGKST) is G1 motif. Asp44, Ser45, Gly46, Lys47, Ser48, Thr49, Asp148, Leu173, Thr179, Gly201, Asn269, Lys270, Asp272, and Ala326 together coordinate GTP. Ser48 is a Mg(2+) binding site. Positions 171–179 (DILRSRNST) are G2 motif. Thr179 lines the Mg(2+) pocket. Positions 194–203 (IRMFDVGGQR) are G3 motif. A G4 motif region spans residues 265-272 (ILFLNKFD). Residues 324 to 329 (TTAVDT) form a G5 motif region.

Belongs to the G-alpha family. In terms of assembly, g proteins are composed of 3 units; alpha, beta and gamma. Binding of the beta-gamma subunit complex (git5-git11) to the alpha subunit (gpa2) facilitates interaction with GPCR git3. Interacts with GPCR git3; the interaction is direct and leads to activation of gpa2 upon glucose stimulation. Interacts with adenylate cyclase cyr1 (via N-terminus); the interaction is direct and serves to activate adenylate cyclase and cAMP-PKA signaling, to repress sexual development and gluconeogenesis. Mg(2+) serves as cofactor.

It is found in the cell membrane. Alpha subunit of the heterotrimeric guanine nucleotide-binding protein (G protein) involved in glucose-induced cAMP signaling. Binds to its cognate transmembrane receptor git3, which senses extracellular glucose, and activates cAMP-PKA signaling to repress sexual development and gluconeogenesis. This chain is Guanine nucleotide-binding protein alpha-2 subunit, found in Schizosaccharomyces pombe (strain 972 / ATCC 24843) (Fission yeast).